The sequence spans 1061 residues: RecBCD enzyme subunit RecC (1061 aa).

It belongs to the RecC family. Heterotrimer of RecB, RecC and RecD. All subunits contribute to DNA-binding.

A helicase/nuclease that prepares dsDNA breaks (DSB) for recombinational DNA repair. Binds to DSBs and unwinds DNA via a highly rapid and processive ATP-dependent bidirectional helicase activity. Unwinds dsDNA until it encounters a Chi (crossover hotspot instigator) sequence from the 3' direction. Cuts ssDNA a few nucleotides 3' to the Chi site. The properties and activities of the enzyme are changed at Chi. The Chi-altered holoenzyme produces a long 3'-ssDNA overhang and facilitates RecA-binding to the ssDNA for homologous DNA recombination and repair. Holoenzyme degrades any linearized DNA that is unable to undergo homologous recombination. In the holoenzyme this subunit recognizes the wild-type Chi sequence, and when added to isolated RecB increases its ATP-dependent helicase processivity. The sequence is that of RecBCD enzyme subunit RecC from Buchnera aphidicola subsp. Schizaphis graminum (strain Sg).